Here is a 44-residue protein sequence, read N- to C-terminus: Thymosin beta-4 (44 aa).

Basic and acidic residues predominate over residues Met1–Glu25. Positions Met1–Ser44 are disordered. An N-acetylserine modification is found at Ser2. At Ser2 the chain carries Phosphoserine. At Lys4 the chain carries N6-acetyllysine. N6-acetyllysine; alternate is present on Lys12. Residue Lys12 forms a Glycyl lysine isopeptide (Lys-Gly) (interchain with G-Cter in SUMO2); alternate linkage. A Phosphothreonine modification is found at Thr23. Residue Lys26 is modified to N6-acetyllysine. Ser31 is subject to Phosphoserine. Residue Lys32 is modified to N6-acetyllysine. Residues Glu33–Ser44 show a composition bias toward basic and acidic residues. Position 34 is a phosphothreonine (Thr34). N6-acetyllysine is present on Lys39.

It belongs to the thymosin beta family. Identified in a complex composed of ACTA1, COBL, GSN AND TMSB4X. Interacts with SERPINB1. Post-translationally, acSDKP is inactivated by ACE, which removes the dipeptide Lys-Pro from its C-terminus.

The protein localises to the cytoplasm. It is found in the cytoskeleton. Plays an important role in the organization of the cytoskeleton. Binds to and sequesters actin monomers (G actin) and therefore inhibits actin polymerization. Its function is as follows. Potent inhibitor of bone marrow derived stem cell differentiation. Acts by inhibits the entry of hematopoietic pluripotent stem cells into the S-phase. The chain is Thymosin beta-4 (TMSB4) from Bos taurus (Bovine).